We begin with the raw amino-acid sequence, 594 residues long: Beta-fructofuranosidase, insoluble isoenzyme CWINV3 (594 aa).

The N-terminal stretch at 1–28 (MAKLNRSNIGLSLLLSMFLANFITDLEA) is a signal peptide. Substrate-binding positions include 50-53 (WMND), Gln69, Trp77, and 113-114 (WS). The active site involves Asp53. Asn147 is a glycosylation site (N-linked (GlcNAc...) asparagine). 179 to 180 (RD) lines the substrate pocket. Asn217 is a glycosylation site (N-linked (GlcNAc...) asparagine). Residue Glu235 participates in substrate binding. N-linked (GlcNAc...) asparagine glycans are attached at residues Asn297 and Asn329. The cysteines at positions 428 and 480 are disulfide-linked.

Belongs to the glycosyl hydrolase 32 family. As to expression, expressed in seedlings, leaves, flowers, and seeds.

It localises to the secreted. Its subcellular location is the extracellular space. The protein resides in the apoplast. It is found in the cell wall. It catalyses the reaction Hydrolysis of terminal, non-reducing (2-&gt;1)- and (2-&gt;6)-linked beta-D-fructofuranose residues in fructans.. Functionally, 6-fructan exohydrolase that can use phlein, levan, neokestose, levanbiose, 6-kestose, and 1-kestose as substrates. The chain is Beta-fructofuranosidase, insoluble isoenzyme CWINV3 (CWINV3) from Arabidopsis thaliana (Mouse-ear cress).